Reading from the N-terminus, the 893-residue chain is UPF0182 protein CLM_0018 (893 aa).

Transmembrane regions (helical) follow at residues 9 to 29 (IPLF…NFII), 49 to 69 (AIII…WMYY), 94 to 114 (LFFI…SSSY), 154 to 174 (VIIS…FILE), 202 to 222 (LAIV…IKIW), 246 to 266 (FYKI…LSIV), and 273 to 293 (VSVC…ASFL).

Belongs to the UPF0182 family.

The protein localises to the cell membrane. The polypeptide is UPF0182 protein CLM_0018 (Clostridium botulinum (strain Kyoto / Type A2)).